The chain runs to 238 residues: MADS-box protein 04g005320 (238 aa).

The 61-residue stretch at 1–61 (MGRGKVELKR…GKLYEFCSTS (61 aa)) folds into the MADS-box domain. One can recognise a K-box domain in the interval 87 to 177 (SQNNYQEYMK…KTKLEENSVA (91 aa)).

Its subcellular location is the nucleus. Probable MADS-box transcription factor that functions with J2 and EJ2 in meristem maturation. The sequence is that of MADS-box protein 04g005320 from Solanum lycopersicum (Tomato).